The chain runs to 470 residues: ATP synthase subunit beta (470 aa).

148 to 155 is an ATP binding site; that stretch reads GGAGVGKT.

This sequence belongs to the ATPase alpha/beta chains family. F-type ATPases have 2 components, CF(1) - the catalytic core - and CF(0) - the membrane proton channel. CF(1) has five subunits: alpha(3), beta(3), gamma(1), delta(1), epsilon(1). CF(0) has three main subunits: a(1), b(2) and c(9-12). The alpha and beta chains form an alternating ring which encloses part of the gamma chain. CF(1) is attached to CF(0) by a central stalk formed by the gamma and epsilon chains, while a peripheral stalk is formed by the delta and b chains.

Its subcellular location is the cell inner membrane. It catalyses the reaction ATP + H2O + 4 H(+)(in) = ADP + phosphate + 5 H(+)(out). Functionally, produces ATP from ADP in the presence of a proton gradient across the membrane. The catalytic sites are hosted primarily by the beta subunits. The sequence is that of ATP synthase subunit beta from Saccharophagus degradans (strain 2-40 / ATCC 43961 / DSM 17024).